The following is a 692-amino-acid chain: Highly divergent homeobox (692 aa).

Positions 3 to 63 form a DNA-binding region, homeobox 1; it reads LRSVFTVEQQ…NKRRKMSSKS (61 aa). The segment covering 117–133 has biased composition (polar residues); sequence SSSSKQGTTKHTNTQIT. The tract at residues 117–136 is disordered; the sequence is SSSSKQGTTKHTNTQITEAH. Residues Lys137, Lys142, Lys146, Lys165, Lys174, Lys196, Lys214, Lys223, and Lys234 each participate in a glycyl lysine isopeptide (Lys-Gly) (interchain with G-Cter in SUMO2) cross-link. The homeobox 2 DNA-binding region spans 437–500; the sequence is ALQDRTQFSD…NRRRKYRLMG (64 aa). Disordered stretches follow at residues 505 to 541 and 647 to 692; these read PPRGGPADFSEQPESGSLSALTPGEEAGPEVGEDNDR and KDQQ…SDSL. The span at 676-692 shows a compositional bias: polar residues; sequence TSLSVSSLSEKNASDSL.

The protein resides in the nucleus. This Mus musculus (Mouse) protein is Highly divergent homeobox (Hdx).